Reading from the N-terminus, the 440-residue chain is uncharacterized protein (440 aa).

The next 10 helical transmembrane spans lie at 1 to 21, 29 to 49, 70 to 90, 101 to 121, 179 to 199, 226 to 246, 258 to 278, 343 to 363, 366 to 386, and 389 to 409; these read MLLV…QLYR, TVFI…SAFE, LLQM…IARI, VGVL…GIAM, TSII…LSLG, FVIR…AATS, IVAS…LLFF, IYPA…PFSF, ILTL…VGGG, and FAAI…GLLI.

Belongs to the dicarboxylate/amino acid:cation symporter (DAACS) (TC 2.A.23) family.

The protein localises to the cell membrane. This is an uncharacterized protein from Haemophilus influenzae (strain ATCC 51907 / DSM 11121 / KW20 / Rd).